Consider the following 129-residue polypeptide: Fluoride-specific ion channel FluC 2 (129 aa).

A run of 4 helical transmembrane segments spans residues Phe-3–Trp-23, Ala-32–Ala-52, Leu-59–Phe-79, and Gly-90–Val-110. Na(+) contacts are provided by Gly-71 and Thr-74.

The protein belongs to the fluoride channel Fluc/FEX (TC 1.A.43) family.

Its subcellular location is the cell membrane. The enzyme catalyses fluoride(in) = fluoride(out). With respect to regulation, na(+) is not transported, but it plays an essential structural role and its presence is essential for fluoride channel function. Fluoride-specific ion channel. Important for reducing fluoride concentration in the cell, thus reducing its toxicity. The chain is Fluoride-specific ion channel FluC 2 from Listeria monocytogenes serotype 4b (strain F2365).